The following is a 569-amino-acid chain: GATOR1 complex protein NPRL3 (569 aa).

Disordered stretches follow at residues 27-60 (PFQR…DQDG) and 441-476 (TPNA…SGDS). 2 stretches are compositionally biased toward polar residues: residues 34-52 (HPAS…NNTG) and 441-468 (TPNA…NSSA). Ser476 carries the phosphoserine modification.

The protein belongs to the NPR3 family. As to quaternary structure, within the GATOR complex, component of the GATOR1 subcomplex, made of DEPDC5, NPRL2 and NPRL3. GATOR1 mediates the strong interaction of the GATOR complex with small GTPases Rag (RagA/RRAGA, RagB/RRAGB, RagC/RRAGC and/or RagD/RRAGD) heterodimers. GATOR1 interacts with GPR155/LYCHOS; interaction takes place in presence of cholesterol and prevents interaction between GATOR1 and KICSTOR.

It is found in the lysosome membrane. Its function is as follows. As a component of the GATOR1 complex functions as an inhibitor of the amino acid-sensing branch of the mTORC1 pathway. In response to amino acid depletion, the GATOR1 complex has GTPase activating protein (GAP) activity and strongly increases GTP hydrolysis by RagA/RRAGA (or RagB/RRAGB) within heterodimeric Rag complexes, thereby turning them into their inactive GDP-bound form, releasing mTORC1 from lysosomal surface and inhibiting mTORC1 signaling. In the presence of abundant amino acids, the GATOR1 complex is negatively regulated by GATOR2, the other GATOR subcomplex, in this amino acid-sensing branch of the TORC1 pathway. The protein is GATOR1 complex protein NPRL3 of Mus musculus (Mouse).